Reading from the N-terminus, the 120-residue chain is Ribosome-binding factor A (120 aa).

It belongs to the RbfA family. Monomer. Binds 30S ribosomal subunits, but not 50S ribosomal subunits or 70S ribosomes.

It localises to the cytoplasm. Functionally, one of several proteins that assist in the late maturation steps of the functional core of the 30S ribosomal subunit. Associates with free 30S ribosomal subunits (but not with 30S subunits that are part of 70S ribosomes or polysomes). Required for efficient processing of 16S rRNA. May interact with the 5'-terminal helix region of 16S rRNA. The protein is Ribosome-binding factor A of Chlorobaculum tepidum (strain ATCC 49652 / DSM 12025 / NBRC 103806 / TLS) (Chlorobium tepidum).